Consider the following 410-residue polypeptide: Bifunctional enzyme IspD/IspF (410 aa).

Residues 1-257 (MSHDPVVPSA…AGAGSASSRL (257 aa)) are 2-C-methyl-D-erythritol 4-phosphate cytidylyltransferase. Positions 258–410 (RSGIGTDVHA…AVATALVERL (153 aa)) are 2-C-methyl-D-erythritol 2,4-cyclodiphosphate synthase. A divalent metal cation-binding residues include aspartate 264 and histidine 266. Residues 264–266 (DVH) and 290–291 (HS) contribute to the 4-CDP-2-C-methyl-D-erythritol 2-phosphate site. Histidine 298 contacts a divalent metal cation. Residues 312 to 314 (DIG), 385 to 388 (TTTD), phenylalanine 392, and arginine 395 contribute to the 4-CDP-2-C-methyl-D-erythritol 2-phosphate site.

In the N-terminal section; belongs to the IspD/TarI cytidylyltransferase family. IspD subfamily. It in the C-terminal section; belongs to the IspF family. A divalent metal cation is required as a cofactor.

It catalyses the reaction 2-C-methyl-D-erythritol 4-phosphate + CTP + H(+) = 4-CDP-2-C-methyl-D-erythritol + diphosphate. It carries out the reaction 4-CDP-2-C-methyl-D-erythritol 2-phosphate = 2-C-methyl-D-erythritol 2,4-cyclic diphosphate + CMP. It functions in the pathway isoprenoid biosynthesis; isopentenyl diphosphate biosynthesis via DXP pathway; isopentenyl diphosphate from 1-deoxy-D-xylulose 5-phosphate: step 2/6. Its pathway is isoprenoid biosynthesis; isopentenyl diphosphate biosynthesis via DXP pathway; isopentenyl diphosphate from 1-deoxy-D-xylulose 5-phosphate: step 4/6. Bifunctional enzyme that catalyzes the formation of 4-diphosphocytidyl-2-C-methyl-D-erythritol from CTP and 2-C-methyl-D-erythritol 4-phosphate (MEP) (IspD), and catalyzes the conversion of 4-diphosphocytidyl-2-C-methyl-D-erythritol 2-phosphate (CDP-ME2P) to 2-C-methyl-D-erythritol 2,4-cyclodiphosphate (ME-CPP) with a corresponding release of cytidine 5-monophosphate (CMP) (IspF). This is Bifunctional enzyme IspD/IspF from Clavibacter michiganensis subsp. michiganensis (strain NCPPB 382).